The sequence spans 325 residues: Beta-1,3-galactosyltransferase brn (325 aa).

Residues 1–7 lie on the Cytoplasmic side of the membrane; the sequence is MQSKHRK. The chain crosses the membrane as a helical; Signal-anchor for type II membrane protein span at residues 8–28; sequence LLLRCLLVLPLILLVDYCGLL. The Lumenal segment spans residues 29-325; sequence THLHELNFER…WNECRSANYA (297 aa). Residues N149 and N166 are each glycosylated (N-linked (GlcNAc...) asparagine).

Belongs to the glycosyltransferase 31 family.

It is found in the golgi apparatus membrane. The catalysed reaction is a ganglioside GM2 (d18:1(4E)) + UDP-alpha-D-galactose = a ganglioside GM1 (d18:1(4E)) + UDP + H(+). In terms of biological role, neurogenic protein essential for the development and maintenance of epithelial structure. Required in the germline for establishing the follicular epithelium and for determining the dorsal-ventral polarity. Collaborates with Notch on the apical surface of follicle cells to mediate germline-follicle cell adhesion. Brn has a role in chorion formation. This Drosophila melanogaster (Fruit fly) protein is Beta-1,3-galactosyltransferase brn (brn).